The sequence spans 350 residues: Formimidoylglutamase (350 aa).

Mn(2+)-binding residues include histidine 130, aspartate 165, histidine 167, aspartate 169, aspartate 269, and aspartate 271.

Belongs to the arginase family. Mn(2+) serves as cofactor.

It catalyses the reaction N-formimidoyl-L-glutamate + H2O = formamide + L-glutamate. The protein operates within amino-acid degradation; L-histidine degradation into L-glutamate; L-glutamate from N-formimidoyl-L-glutamate (hydrolase route): step 1/1. Catalyzes the conversion of N-formimidoyl-L-glutamate to L-glutamate and formamide. This Aliivibrio fischeri (strain ATCC 700601 / ES114) (Vibrio fischeri) protein is Formimidoylglutamase.